We begin with the raw amino-acid sequence, 640 residues long: DNA mismatch repair protein MutL (640 aa).

Disordered stretches follow at residues 332–353 and 408–431; these read PNVQ…FNFP and PAHT…TFHD.

The protein belongs to the DNA mismatch repair MutL/HexB family.

Its function is as follows. This protein is involved in the repair of mismatches in DNA. It is required for dam-dependent methyl-directed DNA mismatch repair. May act as a 'molecular matchmaker', a protein that promotes the formation of a stable complex between two or more DNA-binding proteins in an ATP-dependent manner without itself being part of a final effector complex. The chain is DNA mismatch repair protein MutL from Chloroherpeton thalassium (strain ATCC 35110 / GB-78).